Reading from the N-terminus, the 61-residue chain is Small ribosomal subunit protein uS14 (61 aa).

Zn(2+)-binding residues include cysteine 24, cysteine 27, cysteine 40, and cysteine 43.

Belongs to the universal ribosomal protein uS14 family. Zinc-binding uS14 subfamily. In terms of assembly, part of the 30S ribosomal subunit. Contacts proteins S3 and S10. Zn(2+) serves as cofactor.

Binds 16S rRNA, required for the assembly of 30S particles and may also be responsible for determining the conformation of the 16S rRNA at the A site. In Mycobacterium avium (strain 104), this protein is Small ribosomal subunit protein uS14.